The primary structure comprises 836 residues: Translation initiation factor IF-2 (836 aa).

The segment covering 1 to 17 has biased composition (basic residues); the sequence is MLRLMRQKKLSIQRRTK. Disordered stretches follow at residues 1 to 43 and 83 to 240; these read MLRL…RTVK and AAKK…KGAA. A compositionally biased stretch (low complexity) spans 18 to 27; sequence TTVSSTTTGG. Positions 83–153 are enriched in basic and acidic residues; that stretch reads AAKKEADEKV…AAEEAKRYAE (71 aa). Over residues 154–167 the composition is skewed to acidic residues; that stretch reads ADDSDNESSSEDYS. Over residues 192–202 the composition is skewed to basic residues; that stretch reads RGKNKVAKAKK. Over residues 203–229 the composition is skewed to basic and acidic residues; the sequence is GGRDDENSKNSKNERESNRKNQKDAKF. The 171-residue stretch at 335-505 folds into the tr-type G domain; that stretch reads TRAPVVTIMG…LLQSEVLELT (171 aa). The interval 344 to 351 is G1; it reads GHVDHGKT. 344-351 serves as a coordination point for GTP; sequence GHVDHGKT. The segment at 369–373 is G2; the sequence is GITQH. Residues 391–394 form a G3 region; sequence DTPG. GTP-binding positions include 391-395 and 445-448; these read DTPGH and NKID. The G4 stretch occupies residues 445-448; that stretch reads NKID. The segment at 481–483 is G5; that stretch reads SAK.

It belongs to the TRAFAC class translation factor GTPase superfamily. Classic translation factor GTPase family. IF-2 subfamily.

It is found in the cytoplasm. Functionally, one of the essential components for the initiation of protein synthesis. Protects formylmethionyl-tRNA from spontaneous hydrolysis and promotes its binding to the 30S ribosomal subunits. Also involved in the hydrolysis of GTP during the formation of the 70S ribosomal complex. The protein is Translation initiation factor IF-2 of Haemophilus influenzae (strain PittEE).